The primary structure comprises 1331 residues: Receptor-type adenylate cyclase B (1331 aa).

Topologically, residues 1-33 (MYADATHPRRACWCGAGGVSGCVRQRHAYRCSR) are cytoplasmic. A helical membrane pass occupies residues 34–54 (LLAGVLLIVGALTLTLAVSTV). The Extracellular segment spans residues 55–898 (PAAWAAGAVA…SHALTPAQRG (844 aa)). N-linked (GlcNAc...) asparagine glycosylation is found at Asn-255, Asn-429, Asn-558, Asn-574, and Asn-657. A helical transmembrane segment spans residues 899–919 (GAIAGIALLTVILLAVAGLAL). The Cytoplasmic portion of the chain corresponds to 920–1331 (YCCMDNRNND…PTVCNVRGAH (412 aa)). Residues 940-1094 (TLLFTDIESS…DTSNMAARTE (155 aa)) enclose the Guanylate cyclase domain. Mg(2+)-binding residues include Asp-945 and Asp-988.

The protein belongs to the adenylyl cyclase class-3 family. It depends on Mg(2+) as a cofactor.

The protein resides in the membrane. The catalysed reaction is ATP = 3',5'-cyclic AMP + diphosphate. In terms of biological role, could act as a receptor for an unknown ligand. The chain is Receptor-type adenylate cyclase B (RAC-B) from Leishmania donovani.